A 212-amino-acid polypeptide reads, in one-letter code: MNASPQRRIGLYGGSFDPPHMGHLVLAMTAVQHLKLDELRWIPAGVAWQKERTLLSATHRAGMVKAAITGHRGFKLDRREIERNGPSYTIDTVRESQLAEPNAKWFLVIGQDQYERLPTWHEWRELITRVTLAVAGRDGKSPSPPSELLAVWHRIEALPMPPMNVSSTAIRAHLAAGGTAQSLVPDMVPTVVARYIDRYHLYAPPRGGVPAA.

This sequence belongs to the NadD family.

The enzyme catalyses nicotinate beta-D-ribonucleotide + ATP + H(+) = deamido-NAD(+) + diphosphate. It participates in cofactor biosynthesis; NAD(+) biosynthesis; deamido-NAD(+) from nicotinate D-ribonucleotide: step 1/1. Its function is as follows. Catalyzes the reversible adenylation of nicotinate mononucleotide (NaMN) to nicotinic acid adenine dinucleotide (NaAD). The polypeptide is Probable nicotinate-nucleotide adenylyltransferase (Methylibium petroleiphilum (strain ATCC BAA-1232 / LMG 22953 / PM1)).